Consider the following 249-residue polypeptide: Small ribosomal subunit protein eS6 (249 aa).

Lys14 is covalently cross-linked (Glycyl lysine isopeptide (Lys-Gly) (interchain with G-Cter in SUMO2)). Glu35 carries the ADP-ribosyl glutamic acid modification. At Arg137 the chain carries (3R)-3-hydroxyarginine. At Ser148 the chain carries Phosphoserine. The residue at position 211 (Lys211) is an N6-acetyllysine. Residues 217-229 (MKEAKEKRQEQIA) show a composition bias toward basic and acidic residues. The interval 217-249 (MKEAKEKRQEQIAKRRRLSSLRASTSKSESSQK) is disordered. Residues Ser235, Ser236, Ser240, Ser242, Ser244, and Ser247 each carry the phosphoserine modification. Residues 236-249 (SLRASTSKSESSQK) are compositionally biased toward low complexity.

This sequence belongs to the eukaryotic ribosomal protein eS6 family. As to quaternary structure, component of the small ribosomal subunit. Part of the small subunit (SSU) processome, composed of more than 70 proteins and the RNA chaperone small nucleolar RNA (snoRNA) U3. Ribosomal protein S6 is the major substrate of protein kinases in eukaryote ribosomes. The phosphorylation is stimulated by growth factors, tumor promoting agents, and mitogens. It is dephosphorylated at growth arrest. Phosphorylated at Ser-235 and Ser-236 by RPS6KA1 and RPS6KA3; phosphorylation at these sites facilitates the assembly of the pre-initiation complex. Post-translationally, specifically hydroxylated (with R stereochemistry) at C-3 of Arg-137 by KDM8. In terms of processing, mono-ADP-ribosylation at Glu-35 by PARP16 inhibits polysome assembly and mRNA loading, thereby inhibiting protein translation.

It localises to the cytoplasm. It is found in the nucleus. The protein resides in the nucleolus. In terms of biological role, component of the 40S small ribosomal subunit. Plays an important role in controlling cell growth and proliferation through the selective translation of particular classes of mRNA. Part of the small subunit (SSU) processome, first precursor of the small eukaryotic ribosomal subunit. During the assembly of the SSU processome in the nucleolus, many ribosome biogenesis factors, an RNA chaperone and ribosomal proteins associate with the nascent pre-rRNA and work in concert to generate RNA folding, modifications, rearrangements and cleavage as well as targeted degradation of pre-ribosomal RNA by the RNA exosome. The chain is Small ribosomal subunit protein eS6 (RPS6) from Oryctolagus cuniculus (Rabbit).